Here is a 37-residue protein sequence, read N- to C-terminus: MKVRPSVKPICEKCKIIRREGKVMVICENPKHKQKQG.

Belongs to the bacterial ribosomal protein bL36 family.

This chain is Large ribosomal subunit protein bL36, found in Desulforamulus reducens (strain ATCC BAA-1160 / DSM 100696 / MI-1) (Desulfotomaculum reducens).